The sequence spans 81 residues: NADH-ubiquinone oxidoreductase chain 6 (81 aa).

3 helical membrane-spanning segments follow: residues 1–21 (MTYFVFFLGICFVVGVLGVAS), 27–47 (YGVVGLVLASVAGCGWLLSLG), and 48–68 (VSFVALVLFMVYFGGMLVVFV).

It belongs to the complex I subunit 6 family.

The protein resides in the mitochondrion membrane. It catalyses the reaction a ubiquinone + NADH + 5 H(+)(in) = a ubiquinol + NAD(+) + 4 H(+)(out). Core subunit of the mitochondrial membrane respiratory chain NADH dehydrogenase (Complex I) that is believed to belong to the minimal assembly required for catalysis. Complex I functions in the transfer of electrons from NADH to the respiratory chain. The immediate electron acceptor for the enzyme is believed to be ubiquinone. The chain is NADH-ubiquinone oxidoreductase chain 6 (MT-ND6) from Anas platyrhynchos (Mallard).